The chain runs to 429 residues: Histidinol dehydrogenase (429 aa).

NAD(+)-binding residues include Tyr-127, Gln-188, and Asn-211. Residues Ser-234, Gln-256, and His-259 each coordinate substrate. 2 residues coordinate Zn(2+): Gln-256 and His-259. Catalysis depends on proton acceptor residues Glu-324 and His-325. Substrate contacts are provided by His-325, Asp-358, Glu-412, and His-417. Residue Asp-358 coordinates Zn(2+). Position 417 (His-417) interacts with Zn(2+).

The protein belongs to the histidinol dehydrogenase family. Requires Zn(2+) as cofactor.

It catalyses the reaction L-histidinol + 2 NAD(+) + H2O = L-histidine + 2 NADH + 3 H(+). It functions in the pathway amino-acid biosynthesis; L-histidine biosynthesis; L-histidine from 5-phospho-alpha-D-ribose 1-diphosphate: step 9/9. Functionally, catalyzes the sequential NAD-dependent oxidations of L-histidinol to L-histidinaldehyde and then to L-histidine. The chain is Histidinol dehydrogenase from Bacillus cereus (strain ATCC 14579 / DSM 31 / CCUG 7414 / JCM 2152 / NBRC 15305 / NCIMB 9373 / NCTC 2599 / NRRL B-3711).